The chain runs to 412 residues: CHRNA7-FAM7A fusion protein (412 aa).

The next 5 membrane-spanning stretches (helical) occupy residues Gly-144–Leu-164, Ile-172–Ile-192, Gln-205–Leu-225, Trp-240–Arg-254, and Leu-380–Ala-400.

Belongs to the ligand-gated ion channel (TC 1.A.9) family. Expressed in hippocampus.

It localises to the membrane. The sequence is that of CHRNA7-FAM7A fusion protein (CHRFAM7A) from Homo sapiens (Human).